We begin with the raw amino-acid sequence, 473 residues long: Vasculin (473 aa).

3 disordered regions span residues 1 to 25, 44 to 170, and 186 to 341; these read MAQH…SSLN, RRRH…SRTP, and SGFP…HQER. Position 49 is a phosphoserine (serine 49). The residue at position 87 (arginine 87) is an Omega-N-methylarginine. The segment covering 94–117 has biased composition (polar residues); the sequence is NSRSRSSIFHSGKSQGLHENSIPD. A compositionally biased stretch (basic and acidic residues) spans 119 to 133; it reads ETGRKEDKRERRQFE. 2 stretches are compositionally biased toward polar residues: residues 193 to 204 and 248 to 286; these read NLQSQPVKNGTG and NFNT…QQPR. Phosphoserine is present on residues serine 274, serine 276, serine 322, and serine 381. A compositionally biased stretch (basic and acidic residues) spans 293–329; the sequence is MRSDKKSEFLKALKRDRVEEEHEDESHAGSEKDDDSF. The segment at 450–473 is disordered; that stretch reads TFKPTIENDDTETSSSDTSDDDDV. Residues 456 to 473 are compositionally biased toward acidic residues; sequence ENDDTETSSSDTSDDDDV.

The protein belongs to the vasculin family. Interacts with GTF2B, GTF2F2, RNA polymerase II and TBP. In terms of tissue distribution, ubiquitously expressed (at protein level).

Its subcellular location is the nucleus. Functionally, functions as a GC-rich promoter-specific transactivating transcription factor. This Mus musculus (Mouse) protein is Vasculin (Gpbp1).